The sequence spans 1365 residues: Patatin-like phospholipase domain-containing protein 6 (1365 aa).

Residues 1-50 are Lumenal-facing; the sequence is MGTSSHGLATNSSGAKVAERDGFQDVPAPGEGAAGRICGAQPVPFVPQVL. N-linked (GlcNAc...) asparagine glycosylation occurs at asparagine 11. Residues 51 to 71 traverse the membrane as a helical segment; sequence GVMIGAGVAVVVTAVLILLVV. Topologically, residues 72–1365 are cytoplasmic; the sequence is RRLRVPKTPA…QEPPGSATDA (1294 aa). Residue 186-313 participates in a nucleoside 3',5'-cyclic phosphate binding; that stretch reads VLGHFEKPLF…VRVVQIIMVR (128 aa). 2 disordered regions span residues 343 to 427 and 441 to 463; these read FPSP…RSDF and QEGASGGSLAAPARTPTQEPREQ. The residue at position 345 (serine 345) is a Phosphoserine. Residues 350-367 are compositionally biased toward polar residues; it reads TRTSPVRGSKRMVSTSAT. Position 352 is a phosphothreonine (threonine 352). A phosphoserine mark is found at serine 353 and serine 363. Over residues 375–389 the composition is skewed to pro residues; sequence GRPPDPTGAPLPGPT. Serine 411 carries the post-translational modification Phosphoserine. At threonine 455 the chain carries Phosphothreonine. A nucleoside 3',5'-cyclic phosphate-binding positions include 502 to 624 and 620 to 740; these read ELAK…VAAR and TVAA…LSQK. In terms of domain architecture, PNPLA spans 971–1137; that stretch reads LVLGGGGARG…INNLPADIAR (167 aa). The short motif at 975-980 is the GXGXXG element; the sequence is GGGARG. The GXSXG motif lies at 1002–1006; sequence GTSIG. Catalysis depends on serine 1004, which acts as the Nucleophile. Aspartate 1124 functions as the Proton acceptor in the catalytic mechanism. The DGA/G motif lies at 1124 to 1126; that stretch reads DGG. The interval 1296-1365 is disordered; it reads SYVSDGCADG…QEPPGSATDA (70 aa). Over residues 1303–1319 the composition is skewed to acidic residues; the sequence is ADGEESDCLTEYEEDAG.

It belongs to the NTE family. In terms of processing, glycosylated.

The protein resides in the endoplasmic reticulum membrane. The catalysed reaction is a 1-acyl-sn-glycero-3-phosphocholine + H2O = sn-glycerol 3-phosphocholine + a fatty acid + H(+). It catalyses the reaction 1-hexadecanoyl-sn-glycero-3-phosphocholine + H2O = sn-glycerol 3-phosphocholine + hexadecanoate + H(+). The enzyme catalyses 1-(9Z-octadecenoyl)-sn-glycero-3-phosphocholine + H2O = sn-glycerol 3-phosphocholine + (9Z)-octadecenoate + H(+). It carries out the reaction 1-hexadecanoylglycerol + H2O = glycerol + hexadecanoate + H(+). The catalysed reaction is 2-hexadecanoylglycerol + H2O = glycerol + hexadecanoate + H(+). It catalyses the reaction 1-(9Z-octadecenoyl)-glycerol + H2O = glycerol + (9Z)-octadecenoate + H(+). The enzyme catalyses 2-(9Z-octadecenoyl)-glycerol + H2O = glycerol + (9Z)-octadecenoate + H(+). It carries out the reaction 2-(5Z,8Z,11Z,14Z-eicosatetraenoyl)-glycerol + H2O = glycerol + (5Z,8Z,11Z,14Z)-eicosatetraenoate + H(+). The catalysed reaction is 1-hexadecanoyl-sn-glycero-3-phosphate + H2O = sn-glycerol 3-phosphate + hexadecanoate + H(+). Its activity is regulated as follows. Inhibited by a series a OPs such as mipafox (MPX), phenyl saligenin phosphate (PSP), phenyl dipentyl phosphinate (PDPP), diisopropyl fluorophosphate and paraoxon. Its function is as follows. Phospholipase B that deacylates intracellular phosphatidylcholine (PtdCho), generating glycerophosphocholine (GroPtdCho). This deacylation occurs at both sn-2 and sn-1 positions of PtdCho. Catalyzes the hydrolysis of several naturally occurring membrane-associated lipids. Hydrolyzes lysophospholipids and monoacylglycerols, preferring the 1-acyl to the 2-acyl isomer. Does not catalyze hydrolysis of di- or triacylglycerols or fatty acid amides. The protein is Patatin-like phospholipase domain-containing protein 6 (PNPLA6) of Pongo abelii (Sumatran orangutan).